The primary structure comprises 190 residues: MEKVPGDMEIERRERNEELSEAERKAVQATWARLYANCEDVGVAILVRFFVNFPSAKQYFSQFKHMEDPLEMERSPQLRKHACRVMGALNTVVENLHDPDKVSSVLALVGKAHALKHKVEPMYFKILSGVILDVIAEEFANDFPVETQKAWTKLRGLIYSHVTAAYKEVGWVQQVPNTTTLPATLPSSGP.

A disordered region spans residues 1–21; that stretch reads MEKVPGDMEIERRERNEELSE. In terms of domain architecture, Globin spans 18–167; it reads ELSEAERKAV…IYSHVTAAYK (150 aa). A disulfide bond links Cys-38 and Cys-83. Heme b is bound by residues His-81 and His-113.

It belongs to the globin family. Monomeric. Homodimer; disulfide-linked in vitro. Also homooligomeric in vitro. Post-translationally, the formation of an intramolecular disulfide bond between cysteines Cys-38 and Cys-83 specifically enhances the nitrite reductase activity. Widely expressed (at protein level).

The protein localises to the cytoplasm. Its subcellular location is the nucleus. The catalysed reaction is Fe(II)-heme b-[protein] + nitric oxide + O2 = Fe(III)-heme b-[protein] + nitrate. The enzyme catalyses Fe(III)-heme b-[protein] + nitric oxide + H2O = Fe(II)-heme b-[protein] + nitrite + 2 H(+). It carries out the reaction 2 superoxide + 2 H(+) = H2O2 + O2. It catalyses the reaction H2O2 + AH2 = A + 2 H2O. The nitric oxide dioxygenase activity is activated by a reducing system composed of cytochrome b5, its upstream reductase CYB5R3 and NADH. Functionally, probable multifunctional globin with a hexacoordinated heme iron required for the catalysis of various reactions depending on redox condition of the cell as well as oxygen availability. Has a nitric oxide dioxygenase (NOD) activity and is most probably involved in cell-mediated and oxygen-dependent nitric oxide consumption. By scavenging this second messenger may regulate several biological processes including endothelium-mediated vasodilation and vascular tone. Under normoxic conditions functions as a nitric oxide dioxygenase (NOD) but under hypoxic conditions the globin may switch its function to that of a nitrite (NO2) reductase (NiR), generating nitric oxide. Could also have peroxidase and superoxide dismutase activities, detoxifying reactive oxygen species and protecting cells against oxidative stress. Also binds dioxygen with low affinity and could function as an oxygen sensor but has probably no function as a respiratory oxygen carrier. The chain is Cytoglobin from Rattus norvegicus (Rat).